The chain runs to 252 residues: Hydroxyacylglutathione hydrolase (252 aa).

Residues His52, His54, Asp56, His57, His107, Asp128, and His166 each coordinate Zn(2+).

This sequence belongs to the metallo-beta-lactamase superfamily. Glyoxalase II family. As to quaternary structure, monomer. Zn(2+) is required as a cofactor.

The catalysed reaction is an S-(2-hydroxyacyl)glutathione + H2O = a 2-hydroxy carboxylate + glutathione + H(+). It participates in secondary metabolite metabolism; methylglyoxal degradation; (R)-lactate from methylglyoxal: step 2/2. Its function is as follows. Thiolesterase that catalyzes the hydrolysis of S-D-lactoyl-glutathione to form glutathione and D-lactic acid. This chain is Hydroxyacylglutathione hydrolase, found in Neisseria meningitidis serogroup C / serotype 2a (strain ATCC 700532 / DSM 15464 / FAM18).